We begin with the raw amino-acid sequence, 240 residues long: Small ribosomal subunit protein uS3m (240 aa).

The protein belongs to the universal ribosomal protein uS3 family.

The protein resides in the mitochondrion. The chain is Small ribosomal subunit protein uS3m (RPS3) from Chondrus crispus (Carrageen Irish moss).